A 240-amino-acid polypeptide reads, in one-letter code: RNA-binding protein pno1 (240 aa).

A compositionally biased stretch (basic and acidic residues) spans 1-15 (MEAENIRADAFEPAK). Positions 1–61 (MEAENIRADA…APPKAKRARS (61 aa)) are disordered. The 50-residue stretch at 164–213 (QSRAIGRLAGKGGRTKFTIENVTKTRIVLADSKIHILGSYQNIQLARRAV) folds into the KH domain.

This sequence belongs to the PNO1 family.

It localises to the nucleus. The protein resides in the nucleolus. In Drosophila melanogaster (Fruit fly), this protein is RNA-binding protein pno1 (l(1)G0004).